Here is a 212-residue protein sequence, read N- to C-terminus: Probable nicotinate-nucleotide adenylyltransferase (212 aa).

The protein belongs to the NadD family.

It catalyses the reaction nicotinate beta-D-ribonucleotide + ATP + H(+) = deamido-NAD(+) + diphosphate. Its pathway is cofactor biosynthesis; NAD(+) biosynthesis; deamido-NAD(+) from nicotinate D-ribonucleotide: step 1/1. Functionally, catalyzes the reversible adenylation of nicotinate mononucleotide (NaMN) to nicotinic acid adenine dinucleotide (NaAD). The protein is Probable nicotinate-nucleotide adenylyltransferase of Chromobacterium violaceum (strain ATCC 12472 / DSM 30191 / JCM 1249 / CCUG 213 / NBRC 12614 / NCIMB 9131 / NCTC 9757 / MK).